We begin with the raw amino-acid sequence, 395 residues long: Elongation factor Tu (395 aa).

Residues 10 to 204 enclose the tr-type G domain; that stretch reads KPHVNVGTIG…AVDEYIPEPT (195 aa). The G1 stretch occupies residues 19 to 26; the sequence is GHVDHGKT. 19-26 contacts GTP; it reads GHVDHGKT. T26 is a Mg(2+) binding site. A G2 region spans residues 60–64; it reads GITIA. The G3 stretch occupies residues 81-84; sequence DCPG. GTP contacts are provided by residues 81–85 and 136–139; these read DCPGH and NKVD. The segment at 136–139 is G4; the sequence is NKVD. Positions 174–176 are G5; sequence SAL.

It belongs to the TRAFAC class translation factor GTPase superfamily. Classic translation factor GTPase family. EF-Tu/EF-1A subfamily. As to quaternary structure, monomer.

The protein localises to the cytoplasm. It catalyses the reaction GTP + H2O = GDP + phosphate + H(+). Its function is as follows. GTP hydrolase that promotes the GTP-dependent binding of aminoacyl-tRNA to the A-site of ribosomes during protein biosynthesis. In Exiguobacterium sibiricum (strain DSM 17290 / CCUG 55495 / CIP 109462 / JCM 13490 / 255-15), this protein is Elongation factor Tu.